Reading from the N-terminus, the 252-residue chain is Protein Flattop homolog (252 aa).

The disordered stretch occupies residues 177–252 (TEKRRRKRTI…EKERKAAKGH (76 aa)). A compositionally biased stretch (basic and acidic residues) spans 218–252 (PKDKPKDKPKDKEAGKKDKTKDKGKEKERKAAKGH).

It belongs to the Flattop family.

The polypeptide is Protein Flattop homolog (Drosophila melanogaster (Fruit fly)).